The chain runs to 364 residues: Putative acetyl-CoA C-acetyltransferase YhfS (364 aa).

Catalysis depends on Cys82, which acts as the Acyl-thioester intermediate. His318 serves as the catalytic Proton acceptor.

The protein belongs to the thiolase-like superfamily. Thiolase family.

In terms of biological role, may be involved in fatty acid metabolism. This is Putative acetyl-CoA C-acetyltransferase YhfS (yhfS) from Bacillus subtilis (strain 168).